The sequence spans 505 residues: ATP synthase subunit alpha (505 aa).

170-177 is an ATP binding site; that stretch reads GDRQTGKT.

This sequence belongs to the ATPase alpha/beta chains family. F-type ATPases have 2 components, CF(1) - the catalytic core - and CF(0) - the membrane proton channel. CF(1) has five subunits: alpha(3), beta(3), gamma(1), delta(1), epsilon(1). CF(0) has four main subunits: a(1), b(1), b'(1) and c(9-12).

It localises to the cellular thylakoid membrane. It catalyses the reaction ATP + H2O + 4 H(+)(in) = ADP + phosphate + 5 H(+)(out). Produces ATP from ADP in the presence of a proton gradient across the membrane. The alpha chain is a regulatory subunit. The sequence is that of ATP synthase subunit alpha from Prochlorococcus marinus (strain MIT 9303).